A 448-amino-acid chain; its full sequence is Probable 3-ketoacyl-CoA thiolase (448 aa).

The active-site Acyl-thioester intermediate is the Cys110. Catalysis depends on proton acceptor residues His402 and Cys432.

The protein belongs to the thiolase-like superfamily. Thiolase family.

Its subcellular location is the mitochondrion. The catalysed reaction is an acyl-CoA + acetyl-CoA = a 3-oxoacyl-CoA + CoA. It functions in the pathway lipid metabolism; fatty acid beta-oxidation. Mitochondrial enzyme that catalyzes reactions of the mitochondrial beta-oxidation pathway. The polypeptide is Probable 3-ketoacyl-CoA thiolase (Caenorhabditis elegans).